The following is a 353-amino-acid chain: Chorismate synthase (353 aa).

2 residues coordinate NADP(+): Arg-48 and Arg-54. FMN-binding positions include 125–127, 238–239, Gly-278, 293–297, and Arg-319; these read RSS, NA, and KPTSS.

The protein belongs to the chorismate synthase family. In terms of assembly, homotetramer. It depends on FMNH2 as a cofactor.

It catalyses the reaction 5-O-(1-carboxyvinyl)-3-phosphoshikimate = chorismate + phosphate. Its pathway is metabolic intermediate biosynthesis; chorismate biosynthesis; chorismate from D-erythrose 4-phosphate and phosphoenolpyruvate: step 7/7. Catalyzes the anti-1,4-elimination of the C-3 phosphate and the C-6 proR hydrogen from 5-enolpyruvylshikimate-3-phosphate (EPSP) to yield chorismate, which is the branch point compound that serves as the starting substrate for the three terminal pathways of aromatic amino acid biosynthesis. This reaction introduces a second double bond into the aromatic ring system. In Bordetella pertussis (strain Tohama I / ATCC BAA-589 / NCTC 13251), this protein is Chorismate synthase.